Reading from the N-terminus, the 251-residue chain is MRKNIVAGNWKMNKNLQEGIALAKELNEALAADKPNCDVVICTPFIHLASVTPIVDKAVIGVGAENCADKVSGAYTGEVSAEMVASTGAEYVILGHSERRAYYHETVEILEEKVKLALANNLKPIFCIGEVLEEREANKQNEVVAAQLASVFSLSAEDFSKIILAYEPVWAIGTGKTATAEQAQEIHAFIRSLIADKYGKEVADNTSILYGGSCKPSNAKELFANPDVDGGLIGGAALKVVDFKGIIDAFK.

9–11 (NWK) contributes to the substrate binding site. The active-site Electrophile is histidine 96. Catalysis depends on glutamate 167, which acts as the Proton acceptor. Substrate contacts are provided by residues glycine 173, serine 213, and 234–235 (GG).

The protein belongs to the triosephosphate isomerase family. As to quaternary structure, homodimer.

Its subcellular location is the cytoplasm. The enzyme catalyses D-glyceraldehyde 3-phosphate = dihydroxyacetone phosphate. It participates in carbohydrate biosynthesis; gluconeogenesis. It functions in the pathway carbohydrate degradation; glycolysis; D-glyceraldehyde 3-phosphate from glycerone phosphate: step 1/1. Functionally, involved in the gluconeogenesis. Catalyzes stereospecifically the conversion of dihydroxyacetone phosphate (DHAP) to D-glyceraldehyde-3-phosphate (G3P). The protein is Triosephosphate isomerase of Phocaeicola vulgatus (strain ATCC 8482 / DSM 1447 / JCM 5826 / CCUG 4940 / NBRC 14291 / NCTC 11154) (Bacteroides vulgatus).